The primary structure comprises 590 residues: UvrABC system protein C (590 aa).

The region spanning 14–91 is the GIY-YIG domain; it reads DQPGCYLMKD…IKKYDPKYNV (78 aa). The region spanning 196-231 is the UVR domain; the sequence is QQIKKELTEKMQEAAEQLEFERAKELRDQIAYIDST.

It belongs to the UvrC family. As to quaternary structure, interacts with UvrB in an incision complex.

The protein localises to the cytoplasm. Its function is as follows. The UvrABC repair system catalyzes the recognition and processing of DNA lesions. UvrC both incises the 5' and 3' sides of the lesion. The N-terminal half is responsible for the 3' incision and the C-terminal half is responsible for the 5' incision. This is UvrABC system protein C from Bacillus pumilus (strain SAFR-032).